A 622-amino-acid polypeptide reads, in one-letter code: Golgin subfamily A member 6-like protein 7 (622 aa).

Disordered stretches follow at residues 1-82 (MMSE…QQAL), 251-496 (RKHE…RKQV), and 511-580 (EKMQ…HDNR). 6 stretches are compositionally biased toward basic and acidic residues: residues 57–74 (SPEDKQQNRAQLKEENKA), 251–275 (RKHEEKMWRQEQRLRDQEKELREQE), 283–332 (EQMR…KQEE), 339–367 (EQMRKQEKQMLKQKEQMRKQEEQMWKQEE), 374–388 (EQMRKQEEQMWKQEE), and 395–420 (EQMRKQEEQMWKQEEQMGEQMRKQEE). A coiled-coil region spans residues 100–534 (KTELETALHD…EKRREKKERM (435 aa)). Over residues 477–489 (QMGEQEEQMGEQE) the composition is skewed to acidic residues. Basic and acidic residues-rich tracts occupy residues 511–546 (EKMQEEEEKIRRQVEKRREKKERMGEQEKTQEERCS) and 567–580 (PAREAGKGYSHDNR).

Belongs to the GOLGA6 family.

The sequence is that of Golgin subfamily A member 6-like protein 7 from Homo sapiens (Human).